The chain runs to 186 residues: NADH-dependent FMN reductase SfnE (186 aa).

The protein belongs to the SsuE family.

It catalyses the reaction FMNH2 + NAD(+) = FMN + NADH + 2 H(+). Involved in the dimethyl sulfide degradation pathway. Catalyzes the NADH-dependent reduction of FMN. This chain is NADH-dependent FMN reductase SfnE, found in Pseudomonas putida (Arthrobacter siderocapsulatus).